A 217-amino-acid polypeptide reads, in one-letter code: Resolvase homolog YneB (217 aa).

The region spanning K2–G147 is the Resolvase/invertase-type recombinase catalytic domain. The active-site O-(5'-phospho-DNA)-serine intermediate is the S10.

The protein belongs to the site-specific recombinase resolvase family.

The polypeptide is Resolvase homolog YneB (yneB) (Bacillus subtilis (strain 168)).